The chain runs to 386 residues: DNA methyltransferase CcrM (386 aa).

The region spanning 280 to 382 (LGKAELTVMT…LRKIIREQMA (103 aa)) is the RAMA domain.

It belongs to the N(4)/N(6)-methyltransferase family.

It carries out the reaction a 2'-deoxyadenosine in DNA + S-adenosyl-L-methionine = an N(6)-methyl-2'-deoxyadenosine in DNA + S-adenosyl-L-homocysteine + H(+). Functionally, a beta subtype methylase that recognizes the double-stranded sequence 5'-GANTC-3' and methylates A-2 on both strands. CcrM-mediated methylation has important cellular functions. Contributes to the accurate cell-cycle control of DNA replication and cellular morphology. The protein is DNA methyltransferase CcrM (ccrM) of Brucella abortus (strain S19).